The primary structure comprises 381 residues: Mannitol-1-phosphate 5-dehydrogenase (381 aa).

3 to 14 lines the NAD(+) pocket; sequence AVHFGAGNIGRG.

This sequence belongs to the mannitol dehydrogenase family.

The catalysed reaction is D-mannitol 1-phosphate + NAD(+) = beta-D-fructose 6-phosphate + NADH + H(+). This Exiguobacterium sibiricum (strain DSM 17290 / CCUG 55495 / CIP 109462 / JCM 13490 / 255-15) protein is Mannitol-1-phosphate 5-dehydrogenase.